The chain runs to 154 residues: UPF0178 protein YaiI (154 aa).

This sequence belongs to the UPF0178 family.

In Escherichia fergusonii (strain ATCC 35469 / DSM 13698 / CCUG 18766 / IAM 14443 / JCM 21226 / LMG 7866 / NBRC 102419 / NCTC 12128 / CDC 0568-73), this protein is UPF0178 protein YaiI.